We begin with the raw amino-acid sequence, 521 residues long: GMP synthase [glutamine-hydrolyzing] (521 aa).

Residues 5-197 (KILILDFGSQ…VLDICGAQPG (193 aa)) form the Glutamine amidotransferase type-1 domain. The active-site Nucleophile is the cysteine 81. Active-site residues include histidine 171 and glutamate 173. The GMPS ATP-PPase domain occupies 198 to 390 (WTMPNYIEEA…LGLPREMVYR (193 aa)). Residue 225 to 231 (SGGVDSS) participates in ATP binding.

Homodimer.

It catalyses the reaction XMP + L-glutamine + ATP + H2O = GMP + L-glutamate + AMP + diphosphate + 2 H(+). It participates in purine metabolism; GMP biosynthesis; GMP from XMP (L-Gln route): step 1/1. Catalyzes the synthesis of GMP from XMP. The protein is GMP synthase [glutamine-hydrolyzing] of Neisseria meningitidis serogroup C (strain 053442).